Reading from the N-terminus, the 1342-residue chain is MVFSYTEKKRIRKDFGKRPQVLDIPYLLSIQLGSFQKFVKKDPEGQNGLESAFRSVFPIKSYNGNAELRYLDYKLGEPVFDVKECQIRGMTFAAPLRVQLCLVIYERDGSAYNTIKRTQQQEVYMGEIPLMTDNGTFIINGIERVVVSQLHRSPGVFFDSDKGKTHSSGKILYTARIIPYRGSWLDFEFDLKDNLFVRIDRRRKLPVTVLLRALDYTNDQILNTFFNTVVYEFKDDLLFMNLVPERLRGETVSFDIKANDIIYVERGRRITSKHINKLKADNIIKVEVPLNYLMGKVIIKDYLDIKNGELIVAANTEISMDILHNLVKSGFNIIETLFSNDLDYGNYISETLRIDSTVTRFDALVEIYRVMRPGEPPTKEAAEYLFESLFFLEERYDLSDVGRMKFNRSLQRDDISGSGVLTKNDIIDVIKKLIDIRNGKGDVDDIDHLGNRRIRSVGEMAENQFRIGLVRVERAVKERLSLGDLDVLTPQDLINAKPISAAVREFFNSSQLSQFMDQNNPLSEITHKRRISALGPGGLTRERAGFEVRDVHPTHYGRVCPIETPEGPNIGLINSLSVYARTNKYGFLETPYRRVCDGKVSNDIHYLSAIEEGDFIIAQANTNLNKDGQFIDDLITCRNKGESGLFRKDQIDYMDVSTQQIVSVAASLIPFLEHDDANRALMGANMQRQAVPVIRSEKPLVGTGMERSVAVDSGVTVVAKRGGMVKYVDASRIVIHVNVNEISVEEAGIDIYNLKKYVRSNQNTCINQRPCVELGELIKKGDVIADGPSTDLGELALGQNMRIAFMPWNGYNFEDSMLVSERVVQEDRFTSIHIQELSCISRDTKLGPEEITSDIPNIGETALSKLDEVGVVYIGAEVVGGDILVGKITPKGETQLTPEEKLLRAIFGEKASDVKDSSLRVPNGICGTVIDVQIFTRDGIKKDKRALNIELTKLNQIKKDLGEELKIFESALFDRVYALLISSGVKKESLLDMNRCAWLNLKLKDITKQNQLLQLSHQYLDLKRIFEEKISIQYQKITQGDELAPGILKVVKVYLAVKRQIQPGDKMAGRHGNKGVISKINPVEDMPYDEYGVPVDIVLNPLGVPSRMNIGQILETHLGMAAKGIGDQINLMLQQHQEINKLRKFIQKAYKLGVGVRQNIDLNTFSDLEVLRLAKNLKSGMPIATPVFDGATEQEIKELLQLSGLPTSGQITLFDGCTGEVFERKVTVGYMYMLKLNHLVDDKMHARSTGSYSLVTQQPLGGKAQFGGQRFGEMEVWALEAYGASYTLQEMLTVKSDDVNGRTKMYKNIIDGNHMMEPGMPESFNVLLKEIRSLAINIELDD.

It belongs to the RNA polymerase beta chain family. As to quaternary structure, the RNAP catalytic core consists of 2 alpha, 1 beta, 1 beta' and 1 omega subunit. When a sigma factor is associated with the core the holoenzyme is formed, which can initiate transcription.

It carries out the reaction RNA(n) + a ribonucleoside 5'-triphosphate = RNA(n+1) + diphosphate. DNA-dependent RNA polymerase catalyzes the transcription of DNA into RNA using the four ribonucleoside triphosphates as substrates. The sequence is that of DNA-directed RNA polymerase subunit beta from Blochmanniella floridana.